A 186-amino-acid chain; its full sequence is ATP synthase subunit delta (186 aa).

The protein belongs to the ATPase delta chain family. In terms of assembly, F-type ATPases have 2 components, F(1) - the catalytic core - and F(0) - the membrane proton channel. F(1) has five subunits: alpha(3), beta(3), gamma(1), delta(1), epsilon(1). F(0) has three main subunits: a(1), b(2) and c(10-14). The alpha and beta chains form an alternating ring which encloses part of the gamma chain. F(1) is attached to F(0) by a central stalk formed by the gamma and epsilon chains, while a peripheral stalk is formed by the delta and b chains.

It is found in the cell inner membrane. Its function is as follows. F(1)F(0) ATP synthase produces ATP from ADP in the presence of a proton or sodium gradient. F-type ATPases consist of two structural domains, F(1) containing the extramembraneous catalytic core and F(0) containing the membrane proton channel, linked together by a central stalk and a peripheral stalk. During catalysis, ATP synthesis in the catalytic domain of F(1) is coupled via a rotary mechanism of the central stalk subunits to proton translocation. This protein is part of the stalk that links CF(0) to CF(1). It either transmits conformational changes from CF(0) to CF(1) or is implicated in proton conduction. In Brucella abortus (strain S19), this protein is ATP synthase subunit delta.